Here is a 642-residue protein sequence, read N- to C-terminus: MPVITLPDGSKREFAHAVSTLDVAADIGPGLAKACIAGRVNGELKDACDLIETDAELSIITAKDEEGVEILRHSCAHLLGHAIKQMWPETKMAIGPVIDNGFYYDIDLEHKLTQDDIDALEKRMLQLAKTNYDVVKRVVSWQEARDAFAARGEDYKIAILDENISKDATPALYHHEEYTDMCRGPHVPNMRFCQHFKLMSIAGAYWRGNSENKMLQRIYGTAWADKKALSTHLTRLEEAAKRDHRKIGKQLDLYHMQEEAPGMVFWHNDGWSIFLELERFIRRKLNQYTYQEVKGPLMMDRVLWERSGHWDKYSEAMFTTSSENREYAIKPMNCPGHVQIFNQGLKSYRDLPLRMAEFGCCHRNEPSGSLHGLMRVRGFTQDDAHIFCTDSQVQEEVSACIQMVYDTYATFGFENIVVKLSTRPEKRIGDDAMWDRAEEALKQALRDNNIEFTILPGEGAFYGPKIEFTLHDCLDRAWQCGTVQLDYALPSRLGATYVAEDNSRQTPVMIHRAILGSLERFLGILIEEYAGRFPTWLAPMQVVVMNITDKQADYVEEVVKFFKEQGIRASFDLRNEKIGFKIREHTLRRVPYLLVVGDQEMENKEVAVRTRDGIDLGKMRLEDFATKIHQQISLRSLKLLEE.

Positions 1–61 (MPVITLPDGS…ETDAELSIIT (61 aa)) constitute a TGS domain. Positions 243–534 (DHRKIGKQLD…LIEEYAGRFP (292 aa)) are catalytic. Zn(2+) is bound by residues C334, H385, and H511.

Belongs to the class-II aminoacyl-tRNA synthetase family. As to quaternary structure, homodimer. Zn(2+) serves as cofactor.

It localises to the cytoplasm. The enzyme catalyses tRNA(Thr) + L-threonine + ATP = L-threonyl-tRNA(Thr) + AMP + diphosphate + H(+). Functionally, catalyzes the attachment of threonine to tRNA(Thr) in a two-step reaction: L-threonine is first activated by ATP to form Thr-AMP and then transferred to the acceptor end of tRNA(Thr). Also edits incorrectly charged L-seryl-tRNA(Thr). This is Threonine--tRNA ligase from Shewanella baltica (strain OS195).